A 222-amino-acid chain; its full sequence is V-type ATP synthase subunit D (222 aa).

This sequence belongs to the V-ATPase D subunit family.

Its function is as follows. Produces ATP from ADP in the presence of a proton gradient across the membrane. The polypeptide is V-type ATP synthase subunit D (Acetivibrio thermocellus (strain ATCC 27405 / DSM 1237 / JCM 9322 / NBRC 103400 / NCIMB 10682 / NRRL B-4536 / VPI 7372) (Clostridium thermocellum)).